The following is a 96-amino-acid chain: Glutamyl-tRNA(Gln) amidotransferase subunit C (96 aa).

It belongs to the GatC family. In terms of assembly, heterotrimer of A, B and C subunits.

It catalyses the reaction L-glutamyl-tRNA(Gln) + L-glutamine + ATP + H2O = L-glutaminyl-tRNA(Gln) + L-glutamate + ADP + phosphate + H(+). It carries out the reaction L-aspartyl-tRNA(Asn) + L-glutamine + ATP + H2O = L-asparaginyl-tRNA(Asn) + L-glutamate + ADP + phosphate + 2 H(+). In terms of biological role, allows the formation of correctly charged Asn-tRNA(Asn) or Gln-tRNA(Gln) through the transamidation of misacylated Asp-tRNA(Asn) or Glu-tRNA(Gln) in organisms which lack either or both of asparaginyl-tRNA or glutaminyl-tRNA synthetases. The reaction takes place in the presence of glutamine and ATP through an activated phospho-Asp-tRNA(Asn) or phospho-Glu-tRNA(Gln). This Pseudomonas aeruginosa (strain ATCC 15692 / DSM 22644 / CIP 104116 / JCM 14847 / LMG 12228 / 1C / PRS 101 / PAO1) protein is Glutamyl-tRNA(Gln) amidotransferase subunit C.